The primary structure comprises 508 residues: Photosystem II CP47 reaction center protein (508 aa).

The next 6 membrane-spanning stretches (helical) occupy residues 21 to 36 (SVHIMHTALVSGWAGS), 101 to 115 (IVFSGLCFLAAIWHW), 140 to 156 (GIHLFLSGVACFGSGAF), 203 to 218 (IAAGILGILAGLFHLS), 237 to 252 (VLSSSIAAVFFAAFIV), and 457 to 472 (TFALLFFFGHIWHGAR).

It belongs to the PsbB/PsbC family. PsbB subfamily. In terms of assembly, PSII is composed of 1 copy each of membrane proteins PsbA, PsbB, PsbC, PsbD, PsbE, PsbF, PsbH, PsbI, PsbJ, PsbK, PsbL, PsbM, PsbT, PsbX, PsbY, PsbZ, Psb30/Ycf12, at least 3 peripheral proteins of the oxygen-evolving complex and a large number of cofactors. It forms dimeric complexes. The cofactor is Binds multiple chlorophylls. PSII binds additional chlorophylls, carotenoids and specific lipids..

The protein localises to the plastid. The protein resides in the chloroplast thylakoid membrane. In terms of biological role, one of the components of the core complex of photosystem II (PSII). It binds chlorophyll and helps catalyze the primary light-induced photochemical processes of PSII. PSII is a light-driven water:plastoquinone oxidoreductase, using light energy to abstract electrons from H(2)O, generating O(2) and a proton gradient subsequently used for ATP formation. The chain is Photosystem II CP47 reaction center protein from Cycas taitungensis (Prince sago).